The primary structure comprises 597 residues: C4b-binding protein alpha chain (597 aa).

The N-terminal stretch at 1 to 48 is a signal peptide; sequence MHPPKTPSGALHRKRKMAAWPFSRLWKVSDPILFQMTLIAALLPAVLG. Sushi domains are found at residues 49–110, 111–172, 173–236, 237–296, 297–362, 363–424, 425–482, and 483–540; these read NCGP…FCIY, KRCR…QCEI, VKCK…TCEK, ITCR…ACEP, NSCI…GCEA, LCCP…SCGD, ICNF…QCKA, and LCRK…KCEW. Disulfide bonds link Cys50–Cys96, Cys81–Cys108, Cys113–Cys154, Cys140–Cys170, Cys175–Cys217, Cys203–Cys234, Cys239–Cys281, Cys267–Cys294, Cys299–Cys348, Cys332–Cys360, Cys365–Cys409, Cys399–Cys422, Cys426–Cys468, Cys454–Cys480, Cys484–Cys525, and Cys511–Cys538. An N-linked (GlcNAc...) asparagine glycan is attached at Asn221. 2 N-linked (GlcNAc...) asparagine glycosylation sites follow: Asn506 and Asn528.

As to quaternary structure, disulfide-linked complex of alpha and beta chains of 3 possible sorts: a 570 kDa complex of 7 alpha chains and 1 beta chain, a 530 kDa homoheptamer of alpha chains or a 500 kDa complex of 6 alpha chains and 1 beta chain. The central body of the alpha chain homomer supports tentacles, each with the binding site for C4b at the end. In terms of assembly, (Microbial infection) Interacts with Staphylococcus aureus protein SdrE; this interaction inhibits complement-mediated bacterial opsonization. Chylomicrons in the plasma.

Its subcellular location is the secreted. Functionally, controls the classical pathway of complement activation. It binds as a cofactor to C3b/C4b inactivator (C3bINA), which then hydrolyzes the complement fragment C4b. It also accelerates the degradation of the C4bC2a complex (C3 convertase) by dissociating the complement fragment C2a. Alpha chain binds C4b. It also interacts with anticoagulant protein S and with serum amyloid P component. The chain is C4b-binding protein alpha chain (C4BPA) from Homo sapiens (Human).